Consider the following 53-residue polypeptide: UPF0391 membrane protein PSEEN0090 (53 aa).

A run of 2 helical transmembrane segments spans residues 4–24 (WAIT…GGIA) and 29–49 (GIAK…FFFG).

This sequence belongs to the UPF0391 family.

It localises to the cell membrane. This Pseudomonas entomophila (strain L48) protein is UPF0391 membrane protein PSEEN0090.